The primary structure comprises 785 residues: MTSDWDEIKRLASDFQKAQLTTSLQRLSERNCVEVVSLLIEKGLLEVIYTTDGKEYLTQVHLKQEVRDEMFVRGGRVNLVDLSKALTVDFEKVQVVAEQIVVEDRSVKFILGQLIEQFYMERVASEINEKLAQVGEINVADLTVQYDLPADFILNNIILRHLNKTIMGKQDSSNANIFFTQSYVARSKAKVRGALAAITKPTPVSAILAQCGIPDRLFNLLVNEVATLGSVTSRTPGALYIPHIYTKTQVEWVQNFYRQNGYLEHDSVAGLGVTDVKNFIVNQLPNEKIVHLKKCSVGEKLIEQVASSLEECISTSTYLDVSTVLPSIMSDEDVDQLLTIVLTAPMQKQVLIFNSTILTTKFVEDMIKPCYDIAVENAKKSVDSGTYQQYMAEKMMKHQDVIPDKESAENKADKRDERRKKAAGGKAGGGAQGRETKTKSTKKHARGHRGNVSDSDEDFGPAEKSAGGKKGAKEASIELITVKDISKVLHGGLEEEGLEDLAKQLAQHYYPQFSRLALAKAHELYEISLHQNNQNRRQTHANLQDKLNNLFNDIRLYEKGIKLLPADVQPQLVKYLLKSLGTDFCNEIFFYVAAECNLNSNGTTLTVEQRNKIAADCGQEYRGALQALNKATASSAAVDDFLVVAENSLQACSMILKKIDKKKDRNLILCHKHGLLEQLANCSDPALVLHLAVLILFTISTQSMLHASGRHVSAILSFLQPALAPEQAQTLTTYHDLVLKLLSVENASDDSKADADEVKQQLEKLTPTVKDIAGNYKKAGLTSAE.

Residues 396–416 (MKHQDVIPDKESAENKADKRD) are compositionally biased toward basic and acidic residues. The disordered stretch occupies residues 396–473 (MKHQDVIPDK…KSAGGKKGAK (78 aa)). Over residues 439-449 (KSTKKHARGHR) the composition is skewed to basic residues.

It belongs to the UFL1 family.

Its function is as follows. E3 UFM1-protein ligase that mediates ufmylation of target proteins. This Culex quinquefasciatus (Southern house mosquito) protein is E3 UFM1-protein ligase 1 homolog.